Reading from the N-terminus, the 344-residue chain is Glycerol-3-phosphate dehydrogenase [NAD(P)+] (344 aa).

NADPH-binding residues include S23, Y24, H44, and K118. Residues K118, G147, and T149 each contribute to the sn-glycerol 3-phosphate site. NADPH is bound at residue A151. K203, D256, S266, R267, and N268 together coordinate sn-glycerol 3-phosphate. The active-site Proton acceptor is the K203. R267 contacts NADPH. NADPH-binding residues include V291 and E293.

Belongs to the NAD-dependent glycerol-3-phosphate dehydrogenase family.

Its subcellular location is the cytoplasm. It catalyses the reaction sn-glycerol 3-phosphate + NAD(+) = dihydroxyacetone phosphate + NADH + H(+). The enzyme catalyses sn-glycerol 3-phosphate + NADP(+) = dihydroxyacetone phosphate + NADPH + H(+). It functions in the pathway membrane lipid metabolism; glycerophospholipid metabolism. Catalyzes the reduction of the glycolytic intermediate dihydroxyacetone phosphate (DHAP) to sn-glycerol 3-phosphate (G3P), the key precursor for phospholipid synthesis. The protein is Glycerol-3-phosphate dehydrogenase [NAD(P)+] of Vibrio cholerae serotype O1 (strain ATCC 39541 / Classical Ogawa 395 / O395).